The following is a 372-amino-acid chain: 2,7-anhydro-N-acetylneuraminate hydratase (372 aa).

10 residues coordinate NAD(+): tyrosine 11, phenylalanine 12, aspartate 33, asparagine 36, threonine 68, asparagine 70, histidine 73, glutamate 90, lysine 91, and tryptophan 160.

It belongs to the Gfo/Idh/MocA family. As to quaternary structure, homodimer. NAD(+) serves as cofactor.

The enzyme catalyses N-acetyl-2,7-anhydro-alpha-neuraminate + H2O = N-acetyl-alpha-neuraminate. The catalysed reaction is 2-deoxy-2,3-dehydro-N-acetylneuraminate + H2O = N-acetyl-alpha-neuraminate. All conversions require NAD(+) as a cofactor, which is regenerated in the reaction. The presence of EGTA and several divalent cations does not affect the activity. In terms of biological role, hydratase involved in the degradation of sialic acids. Catalyzes the reversible conversion of the dehydrated form of N-acetylneuraminate (Neu5Ac), 2,7-anhydro-N-acetylneuraminate (2,7-AN), to Neu5Ac. Also catalyzes the irreversible conversion of 2-deoxy-2,3-didehydro-N-acetylneuraminate (2,3-EN) to Neu5Ac. The reaction mechanism involves keto intermediates and the transient formation of NADH. In Escherichia coli (strain K12), this protein is 2,7-anhydro-N-acetylneuraminate hydratase.